The chain runs to 562 residues: Gut esterase 1 (562 aa).

Residues 1–16 (MRVLLASLLIFGACWA) form the signal peptide. Residues Cys75 and Cys93 are joined by a disulfide bond. The Acyl-ester intermediate role is filled by Ser199. Cysteines 251 and 259 form a disulfide. Catalysis depends on charge relay system residues Glu320 and His451. A Prevents secretion from ER motif is present at residues 559–562 (KDEL).

The protein belongs to the type-B carboxylesterase/lipase family. In terms of tissue distribution, expressed only in the intestine.

It localises to the endoplasmic reticulum lumen. The enzyme catalyses a carboxylic ester + H2O = an alcohol + a carboxylate + H(+). This chain is Gut esterase 1 (ges-1), found in Caenorhabditis briggsae.